Reading from the N-terminus, the 243-residue chain is Probable transcriptional regulatory protein LSEI_1022 (243 aa).

Positions 1–23 (MSGHSKWHNIQGRKNAQDSKRGK) are disordered.

It belongs to the TACO1 family.

The protein resides in the cytoplasm. This Lacticaseibacillus paracasei (strain ATCC 334 / BCRC 17002 / CCUG 31169 / CIP 107868 / KCTC 3260 / NRRL B-441) (Lactobacillus paracasei) protein is Probable transcriptional regulatory protein LSEI_1022.